The chain runs to 69 residues: ATP synthase protein 8 (69 aa).

Residues 8–24 (TWTLTISLMIISLFCIY) form a helical membrane-spanning segment. Lys-55 carries the N6-acetyllysine; alternate modification. An N6-succinyllysine; alternate modification is found at Lys-55. An N6-acetyllysine modification is found at Lys-58.

Belongs to the ATPase protein 8 family. As to quaternary structure, F-type ATPases have 2 components, CF(1) - the catalytic core - and CF(0) - the membrane proton channel. Component of an ATP synthase complex composed of ATP5PB, ATP5MC1, ATP5F1E, ATP5PD, ATP5ME, ATP5PF, ATP5MF, MT-ATP6, MT-ATP8, ATP5F1A, ATP5F1B, ATP5F1D, ATP5F1C, ATP5PO, ATP5MG, ATP5MK and ATP5MJ. Interacts with PRICKLE3.

The protein localises to the mitochondrion membrane. Its function is as follows. Mitochondrial membrane ATP synthase (F(1)F(0) ATP synthase or Complex V) produces ATP from ADP in the presence of a proton gradient across the membrane which is generated by electron transport complexes of the respiratory chain. F-type ATPases consist of two structural domains, F(1) - containing the extramembraneous catalytic core and F(0) - containing the membrane proton channel, linked together by a central stalk and a peripheral stalk. During catalysis, ATP synthesis in the catalytic domain of F(1) is coupled via a rotary mechanism of the central stalk subunits to proton translocation. Part of the complex F(0) domain. Minor subunit located with subunit a in the membrane. The chain is ATP synthase protein 8 (MT-ATP8) from Didelphis virginiana (North American opossum).